A 192-amino-acid chain; its full sequence is dTTP/UTP pyrophosphatase (192 aa).

Aspartate 75 (proton acceptor) is an active-site residue.

The protein belongs to the Maf family. YhdE subfamily. The cofactor is a divalent metal cation.

Its subcellular location is the cytoplasm. It carries out the reaction dTTP + H2O = dTMP + diphosphate + H(+). The enzyme catalyses UTP + H2O = UMP + diphosphate + H(+). In terms of biological role, nucleoside triphosphate pyrophosphatase that hydrolyzes dTTP and UTP. May have a dual role in cell division arrest and in preventing the incorporation of modified nucleotides into cellular nucleic acids. The polypeptide is dTTP/UTP pyrophosphatase (Bdellovibrio bacteriovorus (strain ATCC 15356 / DSM 50701 / NCIMB 9529 / HD100)).